Reading from the N-terminus, the 172-residue chain is RNA silencing suppressor p19 (172 aa).

The segment covering 1–20 (MERAIQGNDTREQANGERWD) has biased composition (basic and acidic residues). Positions 1–27 (MERAIQGNDTREQANGERWDGGSGGIT) are disordered.

This sequence belongs to the tombusvirus protein p19 family. As to quaternary structure, homodimer.

In terms of biological role, acts as a suppressor of RNA-mediated gene silencing, also known as post-transcriptional gene silencing (PTGS), a mechanism of plant viral defense that limits the accumulation of viral RNAs. Binds to short interfering RNAs (siRNAs) with high affinity. Acts as a molecular caliper to specifically select siRNAs based on the length of the duplex region of the RNA. This chain is RNA silencing suppressor p19, found in Dianthus caryophyllus (Carnation).